We begin with the raw amino-acid sequence, 403 residues long: cAMP-dependent protein kinase regulatory subunit (403 aa).

The interval 1-155 (MADYTIPSEL…RIQASIGNNF (155 aa)) is dimerization and phosphorylation. Positions 79–125 (YAYSTDDGFGTEDDDDDDDDEDDEAAIPPPVVNRGRRTSVSAESMAP) are disordered. Residues 87-103 (FGTEDDDDDDDDEDDEA) show a composition bias toward acidic residues. S117 carries the phosphoserine modification. Residues 156 to 278 (LFRN…EEVP), E226, R235, 279 to 403 (LLSS…PGEH), E349, and R358 each bind 3',5'-cyclic AMP.

The protein belongs to the cAMP-dependent kinase regulatory chain family. In terms of assembly, tetramer, composed of 2 regulatory (R) and 2 catalytic (C) subunits. In the presence of cAMP it dissociates into 2 active monomeric C subunits and an R dimer that binds four cAMP molecules.

The chain is cAMP-dependent protein kinase regulatory subunit (PKAR) from Blastocladiella emersonii (Aquatic fungus).